Consider the following 294-residue polypeptide: Protoheme IX farnesyltransferase (294 aa).

9 helical membrane passes run 25–45 (SLVL…MGAV), 48–68 (LVTL…NCYW), 92–112 (AVAL…LALG), 115–135 (VLTA…YTPL), 141–161 (AAML…WTAV), 170–190 (FSLF…IALF), 216–236 (VVLY…LHIA), 240–260 (YLAA…WGFF), and 272–292 (FFFS…DRVP).

Belongs to the UbiA prenyltransferase family. Protoheme IX farnesyltransferase subfamily.

It localises to the cell inner membrane. The catalysed reaction is heme b + (2E,6E)-farnesyl diphosphate + H2O = Fe(II)-heme o + diphosphate. It functions in the pathway porphyrin-containing compound metabolism; heme O biosynthesis; heme O from protoheme: step 1/1. Converts heme B (protoheme IX) to heme O by substitution of the vinyl group on carbon 2 of heme B porphyrin ring with a hydroxyethyl farnesyl side group. The sequence is that of Protoheme IX farnesyltransferase from Myxococcus xanthus (strain DK1622).